Reading from the N-terminus, the 288-residue chain is Alpha/beta hydrolase domain-containing protein 17B (288 aa).

Active-site charge relay system residues include serine 170, aspartate 235, and histidine 264.

Belongs to the AB hydrolase superfamily. ABHD17 family. Palmitoylated on cysteine residues located in a cysteine cluster at the N-terminus which promotes membrane localization.

It localises to the cell membrane. Its subcellular location is the recycling endosome membrane. The protein resides in the cell projection. The protein localises to the dendritic spine. It is found in the postsynaptic density membrane. The catalysed reaction is S-hexadecanoyl-L-cysteinyl-[protein] + H2O = L-cysteinyl-[protein] + hexadecanoate + H(+). Hydrolyzes fatty acids from S-acylated cysteine residues in proteins. The chain is Alpha/beta hydrolase domain-containing protein 17B from Xenopus tropicalis (Western clawed frog).